We begin with the raw amino-acid sequence, 702 residues long: Elongation factor G (702 aa).

A tr-type G domain is found at 8 to 290; the sequence is ERYRNIGISA…AVIEYLPAPT (283 aa). Residues 17–24, 88–92, and 142–145 contribute to the GTP site; these read AHIDAGKT, DTPGH, and NKMD.

Belongs to the TRAFAC class translation factor GTPase superfamily. Classic translation factor GTPase family. EF-G/EF-2 subfamily.

The protein resides in the cytoplasm. In terms of biological role, catalyzes the GTP-dependent ribosomal translocation step during translation elongation. During this step, the ribosome changes from the pre-translocational (PRE) to the post-translocational (POST) state as the newly formed A-site-bound peptidyl-tRNA and P-site-bound deacylated tRNA move to the P and E sites, respectively. Catalyzes the coordinated movement of the two tRNA molecules, the mRNA and conformational changes in the ribosome. In Yersinia pseudotuberculosis serotype O:1b (strain IP 31758), this protein is Elongation factor G.